A 61-amino-acid polypeptide reads, in one-letter code: Small ribosomal subunit protein uS14B (61 aa).

Zn(2+) contacts are provided by cysteine 24, cysteine 27, cysteine 40, and cysteine 43.

It belongs to the universal ribosomal protein uS14 family. Zinc-binding uS14 subfamily. As to quaternary structure, part of the 30S ribosomal subunit. Contacts proteins S3 and S10. The cofactor is Zn(2+).

Its function is as follows. Binds 16S rRNA, required for the assembly of 30S particles and may also be responsible for determining the conformation of the 16S rRNA at the A site. The protein is Small ribosomal subunit protein uS14B of Nocardia farcinica (strain IFM 10152).